Here is a 136-residue protein sequence, read N- to C-terminus: Large ribosomal subunit protein uL22 (136 aa).

This sequence belongs to the universal ribosomal protein uL22 family. As to quaternary structure, part of the 50S ribosomal subunit.

Functionally, this protein binds specifically to 23S rRNA; its binding is stimulated by other ribosomal proteins, e.g. L4, L17, and L20. It is important during the early stages of 50S assembly. It makes multiple contacts with different domains of the 23S rRNA in the assembled 50S subunit and ribosome. Its function is as follows. The globular domain of the protein is located near the polypeptide exit tunnel on the outside of the subunit, while an extended beta-hairpin is found that lines the wall of the exit tunnel in the center of the 70S ribosome. The protein is Large ribosomal subunit protein uL22 of Bacteroides fragilis (strain YCH46).